The sequence spans 64 residues: Temporin-ALd (64 aa).

The N-terminal stretch at 1 to 22 (MFTMKKSLLLLFFLGTIHLSLC) is a signal peptide. The propeptide occupies 23-46 (EQERNAEEERRDDLGERQAEVEKR). Leucine 62 bears the Leucine amide mark.

Expressed by the skin glands.

It is found in the secreted. In terms of biological role, antimicrobial peptide with activity against Gram-positive and Gram-negative bacteria and against fungi. Has been tested against S.aureus (MIC=1.25 ug/mL), B.pumilus (MIC=2.5 ug/mL), B.cereus (MIC=15.0 ug/mL), E.coli (MIC=1.25 ug/mL), B.dysenteriae (MIC=5.0 ug/mL), A.cacoaceticus (MIC=15.0 ug/mL), P.aeruginosa (MIC=5.0 ug/mL) and C.albicans (MIC=1.25 ug/mL). Also shows a weak hemolytic activity. The chain is Temporin-ALd from Amolops loloensis (Lolokou Sucker Frog).